Reading from the N-terminus, the 141-residue chain is Prefoldin subunit alpha (141 aa).

The protein belongs to the prefoldin subunit alpha family. Heterohexamer of two alpha and four beta subunits.

It is found in the cytoplasm. Functionally, molecular chaperone capable of stabilizing a range of proteins. Seems to fulfill an ATP-independent, HSP70-like function in archaeal de novo protein folding. The sequence is that of Prefoldin subunit alpha (pfdA) from Methanothermobacter thermautotrophicus (strain ATCC 29096 / DSM 1053 / JCM 10044 / NBRC 100330 / Delta H) (Methanobacterium thermoautotrophicum).